The chain runs to 386 residues: Succinate--CoA ligase [ADP-forming] subunit beta (386 aa).

The ATP-grasp domain maps to 9 to 244 (KEIFRKYGVP…LAEEEPREIQ (236 aa)). ATP contacts are provided by residues lysine 46, 53–55 (GRG), glutamate 99, leucine 102, and glutamate 107. Residues asparagine 199 and aspartate 213 each contribute to the Mg(2+) site. Substrate is bound by residues asparagine 264 and 321–323 (GIM).

The protein belongs to the succinate/malate CoA ligase beta subunit family. Heterotetramer of two alpha and two beta subunits. Mg(2+) serves as cofactor.

It catalyses the reaction succinate + ATP + CoA = succinyl-CoA + ADP + phosphate. The catalysed reaction is GTP + succinate + CoA = succinyl-CoA + GDP + phosphate. It functions in the pathway carbohydrate metabolism; tricarboxylic acid cycle; succinate from succinyl-CoA (ligase route): step 1/1. In terms of biological role, succinyl-CoA synthetase functions in the citric acid cycle (TCA), coupling the hydrolysis of succinyl-CoA to the synthesis of either ATP or GTP and thus represents the only step of substrate-level phosphorylation in the TCA. The beta subunit provides nucleotide specificity of the enzyme and binds the substrate succinate, while the binding sites for coenzyme A and phosphate are found in the alpha subunit. In Myxococcus xanthus (strain DK1622), this protein is Succinate--CoA ligase [ADP-forming] subunit beta.